Reading from the N-terminus, the 437-residue chain is MSRLDDIPSSPGKFKMEKSSYLHRLRFQSSLTKFAFFSFFLLCLISLLFLRSPPSINPSSPSDPSRRSLRTNTYGGPAWEKRLRSSARIRTSTNNGITVLVTGAAGFVGTHVSAALKRRGDGVIGLDNFNDYYDPSLKRARRALLERSGIFIVEGDINDVELLRKLFKIVSFTHVMHLAAQAGVRYAMENPSSYVHSNIAGFVNLLEICKSVNPQPAIVWASSSSVYGLNTKVPFSEKDKTDQPASLYAATKKAGEEIAHTYNHIYGLSLTGLRFFTVYGPWGRPDMAYFFFTKDILKGKSISIFESANHGTVARDFTYIDDIVKGCLAALDTAEKSTGSGGKKRGPAQLRVFNLGNTSPVPVSDLVRILERQLKVKAKKNLIKMPRNGDVPFTHANISLAQRELGYKPTTDLQTGLKKFVRWYLSYYSGDKKAAAR.

Residues S30–L50 traverse the membrane as a helical segment. The tract at residues I56–G76 is disordered. The helical transmembrane segment at G96–L116 threads the bilayer. Residue T98–F129 participates in NAD(+) binding. The active-site Proton acceptor is the Y248.

The protein belongs to the NAD(P)-dependent epimerase/dehydratase family. As to quaternary structure, homodimer. In terms of tissue distribution, in roots, leaves, siliques, flowers, pollen and stems.

The protein localises to the golgi apparatus. It localises to the golgi stack membrane. The catalysed reaction is UDP-alpha-D-glucuronate = UDP-alpha-D-galacturonate. Activated by glycerol, not effected by dimethyl sulfoxide and inhibited by high concentration of monovalent salts, UDP-xylose, UDP-arabinose or UDP. Functionally, involved in the synthesis of the negatively charged monosaccharide that forms the backbone of pectic cell wall components. The protein is UDP-glucuronate 4-epimerase 4 (GAE4) of Arabidopsis thaliana (Mouse-ear cress).